A 342-amino-acid chain; its full sequence is N-acetyl-gamma-glutamyl-phosphate reductase (342 aa).

Cys149 is an active-site residue.

The protein belongs to the NAGSA dehydrogenase family. Type 1 subfamily.

Its subcellular location is the cytoplasm. The catalysed reaction is N-acetyl-L-glutamate 5-semialdehyde + phosphate + NADP(+) = N-acetyl-L-glutamyl 5-phosphate + NADPH + H(+). It participates in amino-acid biosynthesis; L-arginine biosynthesis; N(2)-acetyl-L-ornithine from L-glutamate: step 3/4. Catalyzes the NADPH-dependent reduction of N-acetyl-5-glutamyl phosphate to yield N-acetyl-L-glutamate 5-semialdehyde. In Cereibacter sphaeroides (strain ATCC 17025 / ATH 2.4.3) (Rhodobacter sphaeroides), this protein is N-acetyl-gamma-glutamyl-phosphate reductase.